We begin with the raw amino-acid sequence, 216 residues long: 3-keto-L-gulonate-6-phosphate decarboxylase UlaD (216 aa).

Asp11 contacts substrate. Mg(2+) contacts are provided by Glu33 and Asp62. Arg192 contributes to the substrate binding site.

The protein belongs to the HPS/KGPDC family. KGPDC subfamily. As to quaternary structure, homodimer. It depends on Mg(2+) as a cofactor.

It catalyses the reaction 3-dehydro-L-gulonate 6-phosphate + H(+) = L-xylulose 5-phosphate + CO2. It participates in cofactor degradation; L-ascorbate degradation; D-xylulose 5-phosphate from L-ascorbate: step 2/4. In terms of biological role, catalyzes the decarboxylation of 3-keto-L-gulonate-6-P into L-xylulose-5-P. Is involved in the anaerobic L-ascorbate utilization. This Salmonella choleraesuis (strain SC-B67) protein is 3-keto-L-gulonate-6-phosphate decarboxylase UlaD.